A 311-amino-acid polypeptide reads, in one-letter code: tRNA-cytidine(32) 2-sulfurtransferase (311 aa).

The short motif at 47–52 (SGGKDS) is the PP-loop motif element. [4Fe-4S] cluster is bound by residues C122, C125, and C213.

Belongs to the TtcA family. Homodimer. Mg(2+) is required as a cofactor. It depends on [4Fe-4S] cluster as a cofactor.

The protein localises to the cytoplasm. The enzyme catalyses cytidine(32) in tRNA + S-sulfanyl-L-cysteinyl-[cysteine desulfurase] + AH2 + ATP = 2-thiocytidine(32) in tRNA + L-cysteinyl-[cysteine desulfurase] + A + AMP + diphosphate + H(+). The protein operates within tRNA modification. In terms of biological role, catalyzes the ATP-dependent 2-thiolation of cytidine in position 32 of tRNA, to form 2-thiocytidine (s(2)C32). The sulfur atoms are provided by the cysteine/cysteine desulfurase (IscS) system. The chain is tRNA-cytidine(32) 2-sulfurtransferase from Escherichia coli (strain SMS-3-5 / SECEC).